We begin with the raw amino-acid sequence, 867 residues long: Bifunctional cis-abienol synthase, chloroplastic (867 aa).

A chloroplast-targeting transit peptide spans 1–49; it reads MALPVYSLKSHIPITTIASAKMNYTPNKGMITANGRSRRIRLSPNKIVA. Lys-270 provides a ligand contact to substrate. The DXDD motif signature appears at 403 to 406; that stretch reads DIDD. Lys-490 is a binding site for substrate. Mg(2+) contacts are provided by Asp-622, Asp-626, Asn-763, Asp-764, Thr-767, and Glu-771. The DDXXD motif signature appears at 622–626; the sequence is DDLYD.

It belongs to the terpene synthase family. Tpsd subfamily. The cofactor is Mg(2+).

It localises to the plastid. The protein resides in the chloroplast. The enzyme catalyses 8-hydroxycopalyl diphosphate = cis-abienol + diphosphate. It carries out the reaction (2E,6E,10E)-geranylgeranyl diphosphate + H2O = 8-hydroxycopalyl diphosphate. It participates in terpene metabolism; oleoresin biosynthesis. Functionally, involved in the biosynthesis of cis-abienol, a labdane diterpene that can be used as synthesis precursor of ambergris substitution fragance products. Bifunctional class I/II enzyme in which both the bicyclization and water capture occur in the class II active site, resulting in an intermediary labda-13-en-8-ol diphosphate, which undergoes cleavage of the diphosphate group and final deprotonation at the class I active site. No activity with copalyl diphosphate as substrate. This is Bifunctional cis-abienol synthase, chloroplastic (CAS) from Abies balsamea (Balsam fir).